We begin with the raw amino-acid sequence, 742 residues long: Phosphatidylinositol 4-phosphate 5-kinase its3 (742 aa).

2 disordered regions span residues 1-21 (MKID…IPSY) and 82-228 (LFKE…PDIG). 2 stretches are compositionally biased toward low complexity: residues 90–105 (PSNP…SNDS) and 129–142 (PSSN…LQNL). Polar residues-rich tracts occupy residues 158–181 (RSSS…SSSQ) and 193–218 (EKNS…TSGS). Residues 264–662 (GHENYVTAYN…RFYKFVESSI (399 aa)) form the PIPK domain. The disordered stretch occupies residues 677-742 (QDGQRVNKQQ…RNVTTNTSSS (66 aa)). Residues 680 to 719 (QRVNKQQSVNAGNVRTNNKHGSLNNNTAPSSRNAKSTSAH) show a composition bias toward polar residues.

In terms of assembly, interacts with opy1 (via domain PH 1); the interaction is direct but opy1 does not appear to regulate its3 localization or function. Phosphorylated by casein kinase I. Phosphorylation inactivates the enzyme.

Its subcellular location is the cell membrane. The catalysed reaction is a 1,2-diacyl-sn-glycero-3-phospho-(1D-myo-inositol 4-phosphate) + ATP = a 1,2-diacyl-sn-glycero-3-phospho-(1D-myo-inositol-4,5-bisphosphate) + ADP + H(+). Functionally, catalyzes the phosphorylation of phosphatidylinositol 4-phosphate on the fifth hydroxyl of the myo-inositol ring, to form phosphatidylinositol 4,5-bisphosphate. Involved, together with the calcineurin ppb1, in cytokinesis. The chain is Phosphatidylinositol 4-phosphate 5-kinase its3 (its3) from Schizosaccharomyces pombe (strain 972 / ATCC 24843) (Fission yeast).